A 490-amino-acid chain; its full sequence is Glutamyl-tRNA(Gln) amidotransferase subunit A (490 aa).

Active-site charge relay system residues include Lys77 and Ser152. Ser176 acts as the Acyl-ester intermediate in catalysis.

It belongs to the amidase family. GatA subfamily. Heterotrimer of A, B and C subunits.

It carries out the reaction L-glutamyl-tRNA(Gln) + L-glutamine + ATP + H2O = L-glutaminyl-tRNA(Gln) + L-glutamate + ADP + phosphate + H(+). Its function is as follows. Allows the formation of correctly charged Gln-tRNA(Gln) through the transamidation of misacylated Glu-tRNA(Gln) in organisms which lack glutaminyl-tRNA synthetase. The reaction takes place in the presence of glutamine and ATP through an activated gamma-phospho-Glu-tRNA(Gln). The polypeptide is Glutamyl-tRNA(Gln) amidotransferase subunit A (Limosilactobacillus reuteri (strain DSM 20016) (Lactobacillus reuteri)).